Here is a 563-residue protein sequence, read N- to C-terminus: Arginine--tRNA ligase (563 aa).

The 'HIGH' region motif lies at 121–131; the sequence is PNIAKPFSIGH.

The protein belongs to the class-I aminoacyl-tRNA synthetase family. In terms of assembly, monomer.

It is found in the cytoplasm. The enzyme catalyses tRNA(Arg) + L-arginine + ATP = L-arginyl-tRNA(Arg) + AMP + diphosphate. The chain is Arginine--tRNA ligase from Streptococcus pyogenes serotype M3 (strain ATCC BAA-595 / MGAS315).